We begin with the raw amino-acid sequence, 365 residues long: Zinc finger TRAF-type-containing protein 1-B (365 aa).

The segment at 1 to 56 (MSEEREAPGPLASSSAGLGAEVGQEEVPGGAGPARLLLLPSDSDGPPKKRLRSEAE) is disordered. The RING-type; degenerate zinc finger occupies 72-117 (CAVCLDLPKASVYQCTNGHLMCAGCFIHLLADARLKEEQATCPNCR). A TRAF-type zinc finger spans residues 113 to 186 (CPNCRCEISK…PWQGPYHELT (74 aa)).

It belongs to the ZFTRAF1 family. As to quaternary structure, interacts with LGALS3.

Its subcellular location is the cytoplasm. In Xenopus laevis (African clawed frog), this protein is Zinc finger TRAF-type-containing protein 1-B.